We begin with the raw amino-acid sequence, 532 residues long: Apolipoprotein N-acyltransferase (532 aa).

Transmembrane regions (helical) follow at residues Ile-37–Ala-57, Trp-75–Val-95, Leu-106–Ala-126, Leu-128–Glu-148, Val-179–Leu-199, and Thr-207–Leu-227. Residues Val-245 to Ser-494 form the CN hydrolase domain. Glu-289 acts as the Proton acceptor in catalysis. Residue Lys-353 is part of the active site. Cys-406 acts as the Nucleophile in catalysis. Residues Gly-505–Leu-525 traverse the membrane as a helical segment.

The protein belongs to the CN hydrolase family. Apolipoprotein N-acyltransferase subfamily.

The protein localises to the cell inner membrane. It carries out the reaction N-terminal S-1,2-diacyl-sn-glyceryl-L-cysteinyl-[lipoprotein] + a glycerophospholipid = N-acyl-S-1,2-diacyl-sn-glyceryl-L-cysteinyl-[lipoprotein] + a 2-acyl-sn-glycero-3-phospholipid + H(+). It participates in protein modification; lipoprotein biosynthesis (N-acyl transfer). Catalyzes the phospholipid dependent N-acylation of the N-terminal cysteine of apolipoprotein, the last step in lipoprotein maturation. This chain is Apolipoprotein N-acyltransferase, found in Brucella suis biovar 1 (strain 1330).